The sequence spans 563 residues: MTTLLSFLTSLCSAAIHQAFPELEELTLDITPSTKEHFGHYQCNDAMKLARVLHKSPRAIAESIVAHIPPTPFSSIEIAGAGFINFTFSKEFLASQLQTFSKELANGFRAASPQKVIIDFSSPNIAKDMHVGHLRSTIIGDCLARCFSFVGHDVLRLNHIGDWGTAFGMLITYLQETSQEAIHQLEDLTALYKKAHARFAEDSEFKKRSQHNVVALQSGDAQALALWKQICSVSEKSFQTIYSILDVELHTRGESFYNPFLAEVVADLESKNLVTLSDGAKCVFHEAFSIPLMIQKSDGGYNYATTDVAAMRYRIQQDQADRILIVTDSGQSLHFQLLEATCLAAGYLPSKGIFSHVGFGLVLDTQGRKFKTRSGENIKLRELLDTAVEKAKESLKAHRPDISEEELAYQGPILGINAIKYADLSSHRINDYVFSFEKMLRFEGNTAMSLLYAYVRIQGIKRRMGLESPPQEGPLAVHEPAEEALALTLLRFPEILDLTLRELCPHFLTDYLYALTNKFNAFFRDCHIEGSDSQQERLYLCGLTERTLSTGMHLLGLKTLNHL.

The 'HIGH' region motif lies at 123–133 (PNIAKDMHVGH).

The protein belongs to the class-I aminoacyl-tRNA synthetase family. In terms of assembly, monomer.

The protein resides in the cytoplasm. The catalysed reaction is tRNA(Arg) + L-arginine + ATP = L-arginyl-tRNA(Arg) + AMP + diphosphate. This chain is Arginine--tRNA ligase (argS), found in Chlamydia trachomatis serovar D (strain ATCC VR-885 / DSM 19411 / UW-3/Cx).